The chain runs to 356 residues: Dihydroorotate dehydrogenase (quinone) (356 aa).

Residues 68 to 72 (AGFDK) and Thr92 contribute to the FMN site. Lys72 contacts substrate. 117 to 121 (NRMGF) is a binding site for substrate. FMN contacts are provided by Asn145 and Asn178. A substrate-binding site is contributed by Asn178. The active-site Nucleophile is Ser181. Asn183 contacts substrate. Positions 214 and 242 each coordinate FMN. Residue 243–244 (NT) coordinates substrate. Residues Gly266, Gly295, and 316-317 (YT) each bind FMN.

Belongs to the dihydroorotate dehydrogenase family. Type 2 subfamily. As to quaternary structure, monomer. The cofactor is FMN.

It is found in the cell membrane. The enzyme catalyses (S)-dihydroorotate + a quinone = orotate + a quinol. The protein operates within pyrimidine metabolism; UMP biosynthesis via de novo pathway; orotate from (S)-dihydroorotate (quinone route): step 1/1. In terms of biological role, catalyzes the conversion of dihydroorotate to orotate with quinone as electron acceptor. This Mycobacterium sp. (strain KMS) protein is Dihydroorotate dehydrogenase (quinone).